The following is a 23-amino-acid chain: Cysteine proteinase (23 aa).

Over residues 1 to 10 (ADSLDWREKG) the composition is skewed to basic and acidic residues. Residues 1–23 (ADSLDWREKGVVNSIKDQAQXGS) are disordered.

The protein belongs to the peptidase C1 family.

The protein is Cysteine proteinase of Tritrichomonas foetus (Trichomonas foetus).